The primary structure comprises 493 residues: Ketol-acid reductoisomerase (NADP(+)) (493 aa).

Residues 14–208 (LDQLGRCRFM…GGDRAGVLES (195 aa)) form the KARI N-terminal Rossmann domain. NADP(+) contacts are provided by residues 45-48 (CGAQ), R68, R76, S78, and 108-110 (DKQ). H132 is an active-site residue. G158 contacts NADP(+). 2 consecutive KARI C-terminal knotted domains span residues 209 to 345 (SFVA…SPKA) and 346 to 486 (DGIK…MTDM). Mg(2+)-binding residues include D217, E221, E390, and E394. S415 is a substrate binding site.

The protein belongs to the ketol-acid reductoisomerase family. Requires Mg(2+) as cofactor.

It carries out the reaction (2R)-2,3-dihydroxy-3-methylbutanoate + NADP(+) = (2S)-2-acetolactate + NADPH + H(+). The catalysed reaction is (2R,3R)-2,3-dihydroxy-3-methylpentanoate + NADP(+) = (S)-2-ethyl-2-hydroxy-3-oxobutanoate + NADPH + H(+). It participates in amino-acid biosynthesis; L-isoleucine biosynthesis; L-isoleucine from 2-oxobutanoate: step 2/4. It functions in the pathway amino-acid biosynthesis; L-valine biosynthesis; L-valine from pyruvate: step 2/4. In terms of biological role, involved in the biosynthesis of branched-chain amino acids (BCAA). Catalyzes an alkyl-migration followed by a ketol-acid reduction of (S)-2-acetolactate (S2AL) to yield (R)-2,3-dihydroxy-isovalerate. In the isomerase reaction, S2AL is rearranged via a Mg-dependent methyl migration to produce 3-hydroxy-3-methyl-2-ketobutyrate (HMKB). In the reductase reaction, this 2-ketoacid undergoes a metal-dependent reduction by NADPH to yield (R)-2,3-dihydroxy-isovalerate. This chain is Ketol-acid reductoisomerase (NADP(+)), found in Actinobacillus pleuropneumoniae serotype 3 (strain JL03).